Reading from the N-terminus, the 332-residue chain is Ribosomal RNA small subunit methyltransferase H (332 aa).

S-adenosyl-L-methionine contacts are provided by residues 36–38 (GGY), Asp-54, Phe-81, Asp-102, and Gln-109. The interval 284–332 (VTAGQEEVSANPRARSAKLRAAERTAAPATADDGESPGWPSLANVMRGG) is disordered.

Belongs to the methyltransferase superfamily. RsmH family.

It localises to the cytoplasm. It carries out the reaction cytidine(1402) in 16S rRNA + S-adenosyl-L-methionine = N(4)-methylcytidine(1402) in 16S rRNA + S-adenosyl-L-homocysteine + H(+). Functionally, specifically methylates the N4 position of cytidine in position 1402 (C1402) of 16S rRNA. The polypeptide is Ribosomal RNA small subunit methyltransferase H (Nitrobacter hamburgensis (strain DSM 10229 / NCIMB 13809 / X14)).